The chain runs to 684 residues: TBC1 domain family member 23 (684 aa).

The 182-residue stretch at 44-225 (PLPADLRAKV…AIWDGYLQQA (182 aa)) folds into the Rab-GAP TBC domain. S300 bears the Phosphoserine mark. Positions 334-446 (EGVRFFVVDC…LQQHLADINV (113 aa)) constitute a Rhodanese domain. Positions 459-479 (STSGSRSSINSVDGESPNGSS) are enriched in polar residues. Residues 459 to 482 (STSGSRSSINSVDGESPNGSSDRG) form a disordered region. Phosphoserine occurs at positions 469, 474, and 507. T514 bears the Phosphothreonine mark. The segment at 514 to 558 (TPVDRHVSSSDRVGKPYRGVKPVFSIGDEEEYDTDEIDSSSMSDD) is may mediate the interaction with C17orf75, FAM91A1 and WDR11. The interval 514 to 684 (TPVDRHVSSS…IMKVLDALES (171 aa)) is may mediate the interaction with WASHC1. S556 carries the post-translational modification Phosphoserine. The segment at 559 to 684 (DRKEVVNIQT…IMKVLDALES (126 aa)) is may mediate the interaction with FKBP15 and WASHC2; required for endosome to Golgi trafficking.

As to quaternary structure, directly interacts with GOLGA1 and GOLGA4. Interacts with FAM91A1, C17ORF75 and WDR11; the interaction recruits TBC1D23 to AP-1-derived vesicles. Directly interacts with WASHC1 and WASHC2A/FAM21A. Interacts with FKBP15.

Its subcellular location is the golgi apparatus. It localises to the trans-Golgi network. It is found in the cytoplasmic vesicle. In terms of biological role, putative Rab GTPase-activating protein which plays a role in vesicular trafficking. Involved in endosome-to-Golgi trafficking. Acts as a bridging protein by binding simultaneously to golgins, including GOLGA1 and GOLGA4, located at the trans-Golgi, and to the WASH complex, located on endosome-derived vesicles. Together with WDR11 complex facilitates the golgin-mediated capture of vesicles generated using AP-1. Plays a role in brain development, including in cortical neuron positioning. May also be important for neurite outgrowth, possibly through its involvement in membrane trafficking and cargo delivery, 2 processes that are essential for axonal and dendritic growth. May act as a general inhibitor of innate immunity signaling, strongly inhibiting multiple TLR and dectin/CLEC7A-signaling pathways. Does not alter initial activation events, but instead affects maintenance of inflammatory gene expression several hours after bacterial lipopolysaccharide (LPS) challenge. This Pongo abelii (Sumatran orangutan) protein is TBC1 domain family member 23 (TBC1D23).